Consider the following 415-residue polypeptide: L-cysteine:1D-myo-inositol 2-amino-2-deoxy-alpha-D-glucopyranoside ligase (415 aa).

Positions 1–20 (MQSWSETAVPSVPGQGPPLR) are disordered. Zn(2+) is bound at residue cysteine 43. L-cysteinyl-5'-AMP-binding positions include 43–46 (CGIT), threonine 58, and 81–83 (NVT). A 'HIGH' region motif is present at residues 45-55 (ITPYDATHLGH). Positions 187 to 192 (ERGGDP) match the 'ERGGDP' region motif. Tryptophan 227 is a binding site for L-cysteinyl-5'-AMP. Cysteine 231 serves as a coordination point for Zn(2+). Residue 249-251 (GSD) coordinates L-cysteinyl-5'-AMP. Residue histidine 256 participates in Zn(2+) binding. Isoleucine 283 contacts L-cysteinyl-5'-AMP. The 'KMSKS' region motif lies at 289 to 293 (KMSKS).

The protein belongs to the class-I aminoacyl-tRNA synthetase family. MshC subfamily. Monomer. The cofactor is Zn(2+).

It catalyses the reaction 1D-myo-inositol 2-amino-2-deoxy-alpha-D-glucopyranoside + L-cysteine + ATP = 1D-myo-inositol 2-(L-cysteinylamino)-2-deoxy-alpha-D-glucopyranoside + AMP + diphosphate + H(+). In terms of biological role, catalyzes the ATP-dependent condensation of GlcN-Ins and L-cysteine to form L-Cys-GlcN-Ins. The protein is L-cysteine:1D-myo-inositol 2-amino-2-deoxy-alpha-D-glucopyranoside ligase of Rhodococcus jostii (strain RHA1).